The sequence spans 305 residues: Sulfate adenylyltransferase subunit 2 1 (305 aa).

The disordered stretch occupies residues 283-305 (RSGRAIDHDQAGSMERKKREGYF).

Belongs to the PAPS reductase family. CysD subfamily. Heterodimer composed of CysD, the smaller subunit, and CysN.

The enzyme catalyses sulfate + ATP + H(+) = adenosine 5'-phosphosulfate + diphosphate. The protein operates within sulfur metabolism; hydrogen sulfide biosynthesis; sulfite from sulfate: step 1/3. With CysN forms the ATP sulfurylase (ATPS) that catalyzes the adenylation of sulfate producing adenosine 5'-phosphosulfate (APS) and diphosphate, the first enzymatic step in sulfur assimilation pathway. APS synthesis involves the formation of a high-energy phosphoric-sulfuric acid anhydride bond driven by GTP hydrolysis by CysN coupled to ATP hydrolysis by CysD. The polypeptide is Sulfate adenylyltransferase subunit 2 1 (Chromohalobacter salexigens (strain ATCC BAA-138 / DSM 3043 / CIP 106854 / NCIMB 13768 / 1H11)).